We begin with the raw amino-acid sequence, 69 residues long: Large ribosomal subunit protein bL31 (69 aa).

The protein belongs to the bacterial ribosomal protein bL31 family. Type A subfamily. In terms of assembly, part of the 50S ribosomal subunit.

In terms of biological role, binds the 23S rRNA. The sequence is that of Large ribosomal subunit protein bL31 from Magnetococcus marinus (strain ATCC BAA-1437 / JCM 17883 / MC-1).